The sequence spans 426 residues: Pannexin-1 (426 aa).

Residues 1-40 (MAIAHLATEYVFSDFLLKEPTEPKFKGLRLELAVDKMVTC) are Cytoplasmic-facing. Cysteine 40 is subject to S-nitrosocysteine. The chain crosses the membrane as a helical span at residues 41–61 (IAVGLPLLLISLAFAQEISIG). Residues 62–106 (TQISCFSPSSFSWRQAAFVDSYCWAAVQQKNSLQSESGNLPLWLH) are Extracellular-facing. Intrachain disulfides connect cysteine 66/cysteine 264 and cysteine 84/cysteine 245. Residues 107 to 127 (KFFPYILLLFAILLYLPALFW) form a helical membrane-spanning segment. Over 128–216 (RFAAAPHLCS…HLIMKYISCR (89 aa)) the chain is Cytoplasmic. A Phosphotyrosine modification is found at tyrosine 198. A helical membrane pass occupies residues 217-237 (LVTFAVVLLACIYLSYYFSLS). Topologically, residues 238–277 (SLSDEFLCSIKSGVLRNDSTIPDSFQCKLIAVGIFQLLSL) are extracellular. The N-linked (GlcNAc...) asparagine glycan is linked to asparagine 254. Residues 278–298 (INLLVYALLVPVVIYTLFVPF) form a helical membrane-spanning segment. The Cytoplasmic portion of the chain corresponds to 299–426 (RQKTDVLKVY…SRQRLLNSSC (128 aa)). Position 346 is an S-nitrosocysteine (cysteine 346). The tract at residues 407–426 (ETAANNGEKNSRQRLLNSSC) is disordered.

The protein belongs to the pannexin family. As to quaternary structure, homoheptameric. In terms of processing, S-nitrosylation inhibits channel currents and ATP release. N-glycosylation plays a role in cell surface targeting. Glycosylation at its extracellular surface makes unlikely that two oligomers could dock to form an intercellular channel such as in gap junctions. Exists in three glycosylation states: non-glycosylated (GLY0), high-mannose glycosylated (GLY1), and fully mature glycosylated (GLY2). Post-translationally, cleaved by CASP3 and CASP7 during apoptosis. Cleavage opens the channel for the release of metabolites and induces plasma membrane permeability during apoptosis. In terms of processing, phosphorylated at Tyr-198 by SRC. Phosphorylation activates ATP release. Constitutively phosphorylated in vascular smooth muscle cells. As to expression, expressed in the eye, thyroid, prostate, kidney and liver. Abundantly expressed in the CNS, including hippocampus, olfactory bulb, cortex, cerebellum and white matter.

It is found in the cell membrane. The protein localises to the endoplasmic reticulum membrane. The enzyme catalyses Ca(2+)(in) = Ca(2+)(out). It catalyses the reaction ATP(in) = ATP(out). It carries out the reaction K(+)(in) = K(+)(out). The catalysed reaction is chloride(in) = chloride(out). The enzyme catalyses iodide(out) = iodide(in). It catalyses the reaction Na(+)(in) = Na(+)(out). It carries out the reaction nitrate(in) = nitrate(out). The catalysed reaction is L-aspartate(out) = L-aspartate(in). The enzyme catalyses L-glutamate(out) = L-glutamate(in). It catalyses the reaction D-gluconate(in) = D-gluconate(out). It carries out the reaction spermidine(in) = spermidine(out). Its function is as follows. Ion channel involved in a variety of physiological functions such as blood pressure regulation, apoptotic cell clearance and oogenesis. Forms anion-selective channels with relatively low conductance and an order of permeabilities: nitrate&gt;iodide&gt;chlroride&gt;&gt;aspartate=glutamate=gluconate. Can release ATP upon activation through phosphorylation or cleavage at C-terminus. May play a role as a Ca(2+)-leak channel to regulate ER Ca(2+) homeostasis. During apoptosis, the C terminal tail is cleaved by caspases, which opens the main pore acting as a large-pore ATP efflux channel with a broad distribution, which allows the regulated release of molecules and ions smaller than 1 kDa, such as nucleotides ATP and UTP, and selective plasma membrane permeability to attract phagocytes that engulf the dying cells. This Rattus norvegicus (Rat) protein is Pannexin-1 (Panx1).